The primary structure comprises 30 residues: Nattererin-2 (30 aa).

As to expression, expressed by the skin glands.

The protein resides in the secreted. Its function is as follows. Probably has antibacterial activity. This is Nattererin-2 from Physalaemus nattereri (Cuyaba dwarf frog).